We begin with the raw amino-acid sequence, 898 residues long: Zinc finger protein 574 (898 aa).

3 C2H2-type zinc fingers span residues 16 to 38, 76 to 98, and 126 to 148; these read YVCS…QNSH, YQCL…QELH, and YECV…RQTH. Ser164 is modified (phosphoserine). A C2H2-type 4 zinc finger spans residues 213–235; the sequence is YKCSECSQLFQMPADFLEHQATH. Positions 243 to 305 are disordered; that stretch reads AEEPATQQET…PRRSSSGESG (63 aa). Positions 273–290 are enriched in basic and acidic residues; sequence HSYELRNELRNGEAMGRD. Residue Ser301 is modified to Phosphoserine. C2H2-type zinc fingers lie at residues 310–332, 337–359, 365–387, and 393–414; these read LFCS…LRSH, FKCP…LGDH, FLCV…RRAH, and HSCP…RRTH. Residues 417–460 form a disordered region; it reads GGVPLPTTPVPPEEPAISFPEPAPAETGELEAPELPVSEESSAE. C2H2-type zinc fingers lie at residues 467 to 490, 496 to 518, 524 to 546, 552 to 574, 580 to 602, and 608 to 631; these read YRCL…RFVH, HKCS…LRTH, FPCP…RLTH, YRCG…RLVH, YRCQ…RYHH, and YKCR…LVVH. The segment at 637–660 adopts a C2H2-type 15; degenerate zinc-finger fold; the sequence is HRCPSCGAAFPSSLRLREHRCAAA. Residues 668 to 690 form a C2H2-type 16 zinc finger; sequence FECGTCGKKVGSAARLQAHEAAH. The interval 691–735 is disordered; sequence AAAGPGEVLAKEPPAPRAARATRTPVAPSPTALGGTTSAAPAAPA. Low complexity predominate over residues 707 to 734; sequence RAARATRTPVAPSPTALGGTTSAAPAAP. Ser719 is modified (phosphoserine). Thr726 is modified (phosphothreonine). C2H2-type zinc fingers lie at residues 740–762, 768–790, 796–818, and 824–846; these read LECS…RRIH, YPCP…RRLH, FACE…RRIH, and YSCP…RKTH. At Arg834 the chain carries Asymmetric dimethylarginine.

This sequence belongs to the krueppel C2H2-type zinc-finger protein family.

The protein localises to the nucleus. May be involved in transcriptional regulation. The chain is Zinc finger protein 574 (Znf574) from Rattus norvegicus (Rat).